The chain runs to 326 residues: F-box/LRR-repeat protein 12 (326 aa).

The region spanning 1–47 (MATLFDLPDLVLLEIFSYLPVRDRIRISRVCHRWKRLVDDRWLWRHV) is the F-box domain. LRR repeat units follow at residues 51–78 (LYTM…RMGG), 86–111 (APQL…CLHV), 113–133 (DLSM…ELHS), 161–185 (VPAF…VLGG), 186–211 (TYRV…EVLG), 212–236 (CTLS…IRLT), 237–261 (VGGL…CFQG), and 266–291 (PDMP…EVQG).

In terms of assembly, interacts with SKP1 and CUL1.

Its pathway is protein modification; protein ubiquitination. Functionally, substrate-recognition component of the SCF (SKP1-CUL1-F-box protein)-type E3 ubiquitin ligase complex. Mediates the polyubiquitination and proteasomal degradation of CAMK1 leading to disruption of cyclin D1/CDK4 complex assembly which results in G1 cell cycle arrest in lung epithelia. In Mus musculus (Mouse), this protein is F-box/LRR-repeat protein 12 (Fbxl12).